Consider the following 769-residue polypeptide: MSQIPVATLGVPRIGRRRELKFALEAYWGGESSEGELLAAAAKIRAENWSLQKAAGASIIPSNDFTLYDHVLDMAVTLGAIPEIYGWAGGAVPLDTYFAMARGSQEREACGHSHHDGTGVPALEMTKWFDTNYHYMVPEFDADQTFRLASLKPVEEFDEAKRQGIHTRPVLLGPVSFLKLGKRRDGGDPLELLPRLVPVYAELLGKLLRAGADWVQIDEPCLVLDLTERERRAFTIAYDALAATGGPKLMLATYFGGLGDNLPTAAALPVAGLHLDLVRAPDQLQDVLSAAPEERVISLGVVDGRNIWRTDIAALLDRLGPIVKGNPGRFQLAPSCSLLHVPLDLSIETGVDPELRSWLAFAVQKVEELSILSHALSADRSLVQSLIDMASRALAVRASSTRVNDPHVAGRLSAVTPEMAKRSEPFSERRKLQQERLNLPAFPTTTIGSFPQTAEVRQARAACAKGELSEAGYDGFLKGETEKAIRWQEEIGIDVLVHGEFERNDMVQYFSEQLSGYAFTKQGWVQSYGSRCVRPPIIFGDVSRPQPMTVDWATYAQSLTDKPVKGMLTGPVTMLQWSFVRDDLPRETVCRQIAFALRDEVSDLEAAGIGVIQIDEPALREGLPLREAERPAYLDWAVECFRLASSGVKPETQIHTHMCYAEFNDIIDAIAAMDADVISIETSRSKMELLRAFRAFRYPNDIGPGVFDIHSPRVPPADEMADLLRKAEDGLDPRQIWVNPDCGLKTRKWEEVRFALANMVEAARQMRAG.

Residues 18-21 and lysine 127 each bind 5-methyltetrahydropteroyltri-L-glutamate; that span reads RELK. Residues 447–449 and glutamate 500 each bind L-homocysteine; that span reads IGS. L-methionine-binding positions include 447–449 and glutamate 500; that span reads IGS. 5-methyltetrahydropteroyltri-L-glutamate-binding positions include 531 to 532 and tryptophan 577; that span reads RC. Aspartate 615 contributes to the L-homocysteine binding site. Residue aspartate 615 participates in L-methionine binding. Glutamate 621 contributes to the 5-methyltetrahydropteroyltri-L-glutamate binding site. 3 residues coordinate Zn(2+): histidine 657, cysteine 659, and glutamate 681. The active-site Proton donor is histidine 710. Cysteine 742 contacts Zn(2+).

It belongs to the vitamin-B12 independent methionine synthase family. The cofactor is Zn(2+).

The catalysed reaction is 5-methyltetrahydropteroyltri-L-glutamate + L-homocysteine = tetrahydropteroyltri-L-glutamate + L-methionine. The protein operates within amino-acid biosynthesis; L-methionine biosynthesis via de novo pathway; L-methionine from L-homocysteine (MetE route): step 1/1. Catalyzes the transfer of a methyl group from 5-methyltetrahydrofolate to homocysteine resulting in methionine formation. The chain is 5-methyltetrahydropteroyltriglutamate--homocysteine methyltransferase from Chelativorans sp. (strain BNC1).